A 279-amino-acid polypeptide reads, in one-letter code: Dermonecrotic toxin LspiSicTox-betaIE3ii (279 aa).

The active site involves His5. Mg(2+) contacts are provided by Glu25 and Asp27. The active-site Nucleophile is the His41. Cystine bridges form between Cys45–Cys51 and Cys47–Cys190. Asp85 contacts Mg(2+).

The protein belongs to the arthropod phospholipase D family. Class II subfamily. It depends on Mg(2+) as a cofactor. In terms of tissue distribution, expressed by the venom gland.

The protein resides in the secreted. The enzyme catalyses an N-(acyl)-sphingosylphosphocholine = an N-(acyl)-sphingosyl-1,3-cyclic phosphate + choline. It carries out the reaction an N-(acyl)-sphingosylphosphoethanolamine = an N-(acyl)-sphingosyl-1,3-cyclic phosphate + ethanolamine. The catalysed reaction is a 1-acyl-sn-glycero-3-phosphocholine = a 1-acyl-sn-glycero-2,3-cyclic phosphate + choline. It catalyses the reaction a 1-acyl-sn-glycero-3-phosphoethanolamine = a 1-acyl-sn-glycero-2,3-cyclic phosphate + ethanolamine. Its function is as follows. Dermonecrotic toxins cleave the phosphodiester linkage between the phosphate and headgroup of certain phospholipids (sphingolipid and lysolipid substrates), forming an alcohol (often choline) and a cyclic phosphate. This toxin acts on sphingomyelin (SM). It may also act on ceramide phosphoethanolamine (CPE), lysophosphatidylcholine (LPC) and lysophosphatidylethanolamine (LPE), but not on lysophosphatidylserine (LPS), and lysophosphatidylglycerol (LPG). It acts by transphosphatidylation, releasing exclusively cyclic phosphate products as second products. Induces dermonecrosis, hemolysis, increased vascular permeability, edema, inflammatory response, and platelet aggregation. The protein is Dermonecrotic toxin LspiSicTox-betaIE3ii of Loxosceles spinulosa (Recluse spider).